The primary structure comprises 170 residues: Universal stress protein MJ0531 (170 aa).

This sequence belongs to the universal stress protein A family.

The protein is Universal stress protein MJ0531 of Methanocaldococcus jannaschii (strain ATCC 43067 / DSM 2661 / JAL-1 / JCM 10045 / NBRC 100440) (Methanococcus jannaschii).